The sequence spans 83 residues: uncharacterized protein (83 aa).

Belongs to the chlamydial CPn_0711/CT_665/TC_0036 family.

This is an uncharacterized protein from Chlamydia trachomatis serovar D (strain ATCC VR-885 / DSM 19411 / UW-3/Cx).